The chain runs to 573 residues: Maestro heat-like repeat-containing protein family member 9 (573 aa).

HEAT repeat units follow at residues 118-155 (LYKLQILKEMLVWMSKDSSYLQERIMVIINKVLRFTVT), 252-289 (PLLTDFVQSLLMKLSSPDDKIASDAASILIFTLEFHAE), 292-328 (TMVSKIVDAIYRQLCDNNCMKDVMLQVITLLTCTSPK), 357-394 (SVAPHVLKTILLILKGKPGEMEDTVTEGKRFSLDITNL), and 418-458 (QYFP…LLNC).

The chain is Maestro heat-like repeat-containing protein family member 9 (MROH9) from Homo sapiens (Human).